Here is a 361-residue protein sequence, read N- to C-terminus: 3-dehydroquinate synthase (361 aa).

Residues 71 to 76 (DGEQNK), 105 to 109 (GVIGD), 129 to 130 (TT), Lys-142, Lys-151, and 169 to 172 (CLNT) contribute to the NAD(+) site. Residues Glu-184, His-247, and His-264 each coordinate Zn(2+).

The protein belongs to the sugar phosphate cyclases superfamily. Dehydroquinate synthase family. Co(2+) serves as cofactor. The cofactor is Zn(2+). NAD(+) is required as a cofactor.

It is found in the cytoplasm. The catalysed reaction is 7-phospho-2-dehydro-3-deoxy-D-arabino-heptonate = 3-dehydroquinate + phosphate. It participates in metabolic intermediate biosynthesis; chorismate biosynthesis; chorismate from D-erythrose 4-phosphate and phosphoenolpyruvate: step 2/7. Functionally, catalyzes the conversion of 3-deoxy-D-arabino-heptulosonate 7-phosphate (DAHP) to dehydroquinate (DHQ). The polypeptide is 3-dehydroquinate synthase (Sodalis glossinidius (strain morsitans)).